The following is a 95-amino-acid chain: YcgL domain-containing protein Patl_2802 (95 aa).

The YcgL domain occupies 4–88 (LLCAVYKSSK…PEENLLKQHL (85 aa)).

This Pseudoalteromonas atlantica (strain T6c / ATCC BAA-1087) protein is YcgL domain-containing protein Patl_2802.